The primary structure comprises 723 residues: Nicastrin (723 aa).

Positions 1–16 (MKKWLVIVLIIAGIRC) are cleaved as a signal peptide. Over 17–678 (DGFSDQVFRT…ESVNLYLMED (662 aa)) the chain is Extracellular. Residues asparagine 40, asparagine 181, asparagine 271, asparagine 328, asparagine 409, and asparagine 627 are each glycosylated (N-linked (GlcNAc...) asparagine). The chain crosses the membrane as a helical span at residues 679 to 699 (ASFEYTMILIAVISALLSIFA). Over 700 to 723 (VGRCSETTFIVDEGEPAAEGGEPL) the chain is Cytoplasmic.

The protein belongs to the nicastrin family. Component of the gamma-secretase complex, a complex probably composed of the presenilin homodimer (sel-12, hop-1 or spe-4), nicastrin (aph-2), aph-1 and pen-2.

It is found in the membrane. In terms of biological role, essential subunit of the gamma-secretase complex, an endoprotease complex that catalyzes the intramembrane cleavage of integral membrane proteins such as Notch (glp-1 or lin-12). It may represents a stabilizing cofactor required for the assembly of the gamma-secretase complex. This is Nicastrin (aph-2) from Caenorhabditis elegans.